Here is an 89-residue protein sequence, read N- to C-terminus: Cytochrome b (89 aa).

Transmembrane regions (helical) follow at residues 38-58 (FGPL…FLAM) and 82-89 (WLLRYMHA). Heme b is bound at residue H88.

It belongs to the cytochrome b family. In terms of assembly, the main subunits of complex b-c1 are: cytochrome b, cytochrome c1 and the Rieske protein. Requires heme b as cofactor.

Its subcellular location is the mitochondrion inner membrane. Component of the ubiquinol-cytochrome c reductase complex (complex III or cytochrome b-c1 complex) that is part of the mitochondrial respiratory chain. The b-c1 complex mediates electron transfer from ubiquinol to cytochrome c. Contributes to the generation of a proton gradient across the mitochondrial membrane that is then used for ATP synthesis. The polypeptide is Cytochrome b (MT-CYB) (Brassica napus (Rape)).